Reading from the N-terminus, the 896-residue chain is NEDD4-binding protein 1 (896 aa).

The region spanning 59–143 (QEAVHSAKEY…IQQFVKLFEN (85 aa)) is the KH-like domain. Position 226 is a phosphoserine (S226). T242 carries the phosphothreonine modification. A phosphoserine mark is found at S258 and S300. Disordered stretches follow at residues 403–430 (YPET…PKKT) and 488–507 (ETDG…VNFV). The segment covering 414-430 (VYSSTNELTTDSTPKKT) has biased composition (polar residues). Phosphoserine is present on S562. In terms of domain architecture, RNase NYN spans 617 to 769 (LKHIVIDGSN…LGRSGPRLEE (153 aa)). The interval 801–821 (GTQAASTSHQPPTRIQGAPSS) is disordered. A compositionally biased stretch (polar residues) spans 803 to 813 (QAASTSHQPPT). The tract at residues 849–896 (RSSAETNELREALLKIFPDSEQRLKIDQILVAHPYMKDLNALSAMVLD) is coCUN.

Belongs to the N4BP1 family. In terms of assembly, interacts with NEDD4. Interacts with ITCH (via WW domain 2). In terms of processing, proteolytically cleaved by CASP8 downstream of TLR3 or TLR4, leading to its inactivation. Mainly cleaved at Asp-490 by CASP8. Cleaved by caspase-like protein MALT1 in T-cells following TCR-mediated activation, leading to its inactivation and subsequent viral reactivation during HIV-1 infection. Mono- and polyubiquitinated on the CoCUN region. Monoubiquitinated by NEDD4. Polyubiquitinated, leading to its degradation by the proteasome. Sumoylated with SUMO1, abrogating polyubiquitination and subsequent degradation. Desumoylated by SENP1, leading to accumulation in PML nuclear bodies. Detected in heart, lung, brain, liver, skeletal muscle, pancreas, kidney, spleen, testis and ovary.

It localises to the cytoplasm. Its subcellular location is the cytosol. It is found in the nucleus. The protein resides in the nucleolus. The protein localises to the PML body. Proteolytic cleavage by CASP8 or MALT1 leads to its inactivation. Potent suppressor of cytokine production that acts as a regulator of innate immune signaling and inflammation. Acts as a key negative regulator of select cytokine and chemokine responses elicited by TRIF-independent Toll-like receptors (TLRs), thereby limiting inflammatory cytokine responses to minor insults. In response to more threatening pathogens, cleaved by CASP8 downstream of TLR3 or TLR4, leading to its inactivation, thereby allowing production of inflammatory cytokines. Acts as a restriction factor against some viruses, such as HIV-1: restricts HIV-1 replication by binding to HIV-1 mRNAs and mediating their degradation via its ribonuclease activity. Also acts as an inhibitor of the E3 ubiquitin-protein ligase ITCH: acts by interacting with the second WW domain of ITCH, leading to compete with ITCH's substrates and impairing ubiquitination of substrates. In Homo sapiens (Human), this protein is NEDD4-binding protein 1.